Reading from the N-terminus, the 165-residue chain is MPAESTFDIVSDFERQELVNAIDQARREVATRYDLKDTKTEIVLSEKELTITTESEMHLAAVRDLVQTKALRRNLSIKIFKFGPVQEVSGGRVRQVATLQRGIPEDVAKKLAKLIRDHFPKVQPRIQGDALRVGSKSRDELQAVIRLVKERQDEFDIPLQFTNYR.

It belongs to the YajQ family.

In terms of biological role, nucleotide-binding protein. This chain is Nucleotide-binding protein Rcas_1283, found in Roseiflexus castenholzii (strain DSM 13941 / HLO8).